The sequence spans 236 residues: Small ribosomal subunit protein eS6 (236 aa).

Phosphoserine is present on residues S232 and S233.

The protein belongs to the eukaryotic ribosomal protein eS6 family. Post-translationally, phosphorylated.

The protein is Small ribosomal subunit protein eS6 (RPS6) of Debaryomyces hansenii (strain ATCC 36239 / CBS 767 / BCRC 21394 / JCM 1990 / NBRC 0083 / IGC 2968) (Yeast).